The sequence spans 632 residues: Phosphoglucomutase, chloroplastic (632 aa).

A chloroplast-targeting transit peptide spans 1–72 (MAMESALTST…PSSPSTSVAQ (72 aa)). Alpha-D-glucose 1,6-bisphosphate-binding residues include Arg97 and Ser190. The active-site Phosphoserine intermediate is the Ser190. Positions 190, 355, 357, and 359 each coordinate Mg(2+). The residue at position 190 (Ser190) is a Phosphoserine. Asp359, Arg360, Thr423, Glu442, Ser444, and Lys455 together coordinate alpha-D-glucose 1,6-bisphosphate.

The protein belongs to the phosphohexose mutase family. In terms of assembly, monomer. The cofactor is Mg(2+).

Its subcellular location is the plastid. The protein localises to the chloroplast. It carries out the reaction alpha-D-glucose 1-phosphate = alpha-D-glucose 6-phosphate. The enzyme catalyses O-phospho-L-seryl-[protein] + alpha-D-glucose 1-phosphate = alpha-D-glucose 1,6-bisphosphate + L-seryl-[protein]. It catalyses the reaction alpha-D-glucose 1,6-bisphosphate + L-seryl-[protein] = O-phospho-L-seryl-[protein] + alpha-D-glucose 6-phosphate. With respect to regulation, inhibited by the Calvin cycle intermediates fructose-1,6-bisphosphate and ribulose-1,5-bisphosphate. Its function is as follows. Catalyzes the reversible isomerization of alpha-D-glucose 1-phosphate to alpha-D-glucose 6-phosphate. The mechanism proceeds via the intermediate compound alpha-D-glucose 1,6-bisphosphate. This enzyme participates in both the breakdown and synthesis of glucose. Promotes gravitropic responses, negative in shoots but positive in roots, by facilitating starch granules (statoliths) formation. The sequence is that of Phosphoglucomutase, chloroplastic (PGMP) from Solanum tuberosum (Potato).